A 308-amino-acid polypeptide reads, in one-letter code: D-alanine--D-alanine ligase (308 aa).

In terms of domain architecture, ATP-grasp spans 104–301 (KQIWQGSDLP…FDELCVAILD (198 aa)). Position 130-185 (130-185 (IAELGLPVIIKPVHEGSSVGMSKVEKAEDFAAAIEKATQHDAVVMAEKWITGREFT)) interacts with ATP. Positions 255, 268, and 270 each coordinate Mg(2+).

It belongs to the D-alanine--D-alanine ligase family. Requires Mg(2+) as cofactor. Mn(2+) serves as cofactor.

Its subcellular location is the cytoplasm. It carries out the reaction 2 D-alanine + ATP = D-alanyl-D-alanine + ADP + phosphate + H(+). It functions in the pathway cell wall biogenesis; peptidoglycan biosynthesis. In terms of biological role, cell wall formation. The chain is D-alanine--D-alanine ligase from Acinetobacter baumannii (strain AB307-0294).